The sequence spans 102 residues: Spexin prohormone 1 (102 aa).

Residues 1–26 form the signal peptide; that stretch reads MKDLRTLAAYALALLLLATFVSYSRS. Residues 27-35 constitute a propeptide that is removed on maturation; it reads APMGSFQRR. A Glutamine amide modification is found at Gln49. Positions 50–102 are excised as a propeptide; the sequence is GRRFVSEDRNEGDLYDTIRLESQSQNTENLSISKAAAFLLNVLQQARDEGEPY.

It belongs to the spexin family. In terms of tissue distribution, expressed in the anterior hypothalamus, ventromedial thalamic nucleus and medial longitudinal fasciculus of the brain (at protein level). Widely expressed. Expressed predominantly in the spleen, kidney, liver and testis. Expressed in olfactory bulb, pituitary, telencephalon, diencephalons, spinal cord, optic tectum, cerebellum and hypothalamus of the brain.

It is found in the secreted. The protein localises to the extracellular space. The protein resides in the cytoplasmic vesicle. It localises to the secretory vesicle. In terms of biological role, plays a role in the regulation of food intake and body weight and in reproduction. May also play a role as a central modulator of cardiovascular and renal function and nociception. Its function is as follows. Brain administration of the peptide inhibits food consumption. May function as a satiety factor for feeding control. Involved in the negative regulation of the reproductive axis by inhibiting luteinizing hormone secretion from pituitary cells. This is Spexin prohormone 1 (spx) from Carassius auratus (Goldfish).